The primary structure comprises 678 residues: Dihydroxyacetone phosphate acyltransferase (678 aa).

A phosphoserine mark is found at serine 12 and serine 17. Residues 161-166 (HRSYID) carry the HXXXXD motif motif. Residue lysine 641 is modified to N6-acetyllysine. The Microbody targeting signal signature appears at 676 to 678 (AKL).

This sequence belongs to the GPAT/DAPAT family. As to quaternary structure, part of a heterotrimeric complex composed of GNPAT, AGPS and a modified form of GNPAT. As to expression, highly expressed in liver and testis. Lower levels in heart, brain, lung and kidney. Detected in spleen.

The protein localises to the peroxisome membrane. It catalyses the reaction dihydroxyacetone phosphate + an acyl-CoA = a 1-acylglycerone 3-phosphate + CoA. It carries out the reaction dihydroxyacetone phosphate + hexadecanoyl-CoA = 1-hexadecanoylglycerone 3-phosphate + CoA. It participates in membrane lipid metabolism; glycerophospholipid metabolism. In terms of biological role, dihydroxyacetonephosphate acyltransferase catalyzing the first step in the biosynthesis of plasmalogens, a subset of phospholipids that differ from other glycerolipids by having an alkyl chain attached through a vinyl ether linkage at the sn-1 position of the glycerol backbone, and which unique physical properties have an impact on various aspects of cell signaling and membrane biology. The chain is Dihydroxyacetone phosphate acyltransferase from Mus musculus (Mouse).